Reading from the N-terminus, the 640-residue chain is Chitin elicitor receptor kinase 1 (640 aa).

The signal sequence occupies residues 1–31 (MKFQMKMKSELCRTYKYWLILLVLWLSGVTQ). Residues 32-248 (RETGVLIVDA…GTVHWRSNVG (217 aa)) lie on the Extracellular side of the membrane. 3 cysteine pairs are disulfide-bonded: cysteine 43–cysteine 104, cysteine 49–cysteine 166, and cysteine 102–cysteine 164. 3 LysM domains span residues 53–98 (AYYR…NIYL), 113–160 (FSYT…SLTI), and 179–227 (STYV…KAAN). Chitin is bound by residues 119–125 (TNDTAEK) and 148–154 (DLSSIYS). A helical membrane pass occupies residues 249-269 (IIVGVVVGGIVLAVLLLFALI). Over 270-640 (FGFKHFRRRK…SQPPSGNDQL (371 aa)) the chain is Cytoplasmic. The disordered stretch occupies residues 286 to 308 (MQQSGLLSSSSMAGSKPSRSGST). A compositionally biased stretch (low complexity) spans 289-307 (SGLLSSSSMAGSKPSRSGS). The 283-residue stretch at 330-612 (FSLAKKIGQG…RFAVVQLMTL (283 aa)) folds into the Protein kinase domain. Residues 336 to 344 (IGQGGFASV) and lysine 357 each bind ATP. Aspartate 452 functions as the Proton acceptor in the catalytic mechanism.

The protein belongs to the protein kinase superfamily. Ser/Thr protein kinase family.

The protein resides in the cell membrane. The enzyme catalyses L-seryl-[protein] + ATP = O-phospho-L-seryl-[protein] + ADP + H(+). It carries out the reaction L-threonyl-[protein] + ATP = O-phospho-L-threonyl-[protein] + ADP + H(+). In terms of biological role, lysin motif (LysM) receptor kinase required as a cell surface receptor for chitin elicitor (chitooligosaccharides) signaling leading to innate immunity in response to biotic stresses. The CERK1, MEKK1a/b, MKK1a/b/c and MPK4a/b proteins are involved in pathogen defense. The pathway induces rapid growth inhibition, cell wall depositions and accumulation of defense-related transcripts. This protein is required for response to chitin. Is able to complement the A.thaliana cerk1 mutant. This chain is Chitin elicitor receptor kinase 1, found in Physcomitrium patens (Spreading-leaved earth moss).